Reading from the N-terminus, the 330-residue chain is Aspartate--ammonia ligase (330 aa).

This sequence belongs to the class-II aminoacyl-tRNA synthetase family. AsnA subfamily.

The protein resides in the cytoplasm. The catalysed reaction is L-aspartate + NH4(+) + ATP = L-asparagine + AMP + diphosphate + H(+). It functions in the pathway amino-acid biosynthesis; L-asparagine biosynthesis; L-asparagine from L-aspartate (ammonia route): step 1/1. The polypeptide is Aspartate--ammonia ligase (Escherichia coli O8 (strain IAI1)).